The chain runs to 165 residues: Ribosome maturation factor RimM (165 aa).

Residues 94-165 (EDEFYIADLN…YVILNYQTKV (72 aa)) enclose the PRC barrel domain.

It belongs to the RimM family. As to quaternary structure, binds ribosomal protein uS19.

Its subcellular location is the cytoplasm. An accessory protein needed during the final step in the assembly of 30S ribosomal subunit, possibly for assembly of the head region. Essential for efficient processing of 16S rRNA. May be needed both before and after RbfA during the maturation of 16S rRNA. It has affinity for free ribosomal 30S subunits but not for 70S ribosomes. In Rickettsia typhi (strain ATCC VR-144 / Wilmington), this protein is Ribosome maturation factor RimM.